Reading from the N-terminus, the 277-residue chain is Phosphatidylglycerol--prolipoprotein diacylglyceryl transferase (277 aa).

7 consecutive transmembrane segments (helical) span residues 21–41 (LAVR…LWLA), 60–80 (LLFA…VLFY), 95–115 (VWTG…AMLW), 124–144 (FFTI…AGRL), 176–196 (SQLY…NWFI), 203–223 (GTVS…VEYV), and 239–259 (MGQI…LWAF). Position 143 (R143) interacts with a 1,2-diacyl-sn-glycero-3-phospho-(1'-sn-glycerol).

This sequence belongs to the Lgt family.

The protein localises to the cell inner membrane. It catalyses the reaction L-cysteinyl-[prolipoprotein] + a 1,2-diacyl-sn-glycero-3-phospho-(1'-sn-glycerol) = an S-1,2-diacyl-sn-glyceryl-L-cysteinyl-[prolipoprotein] + sn-glycerol 1-phosphate + H(+). Its pathway is protein modification; lipoprotein biosynthesis (diacylglyceryl transfer). Its function is as follows. Catalyzes the transfer of the diacylglyceryl group from phosphatidylglycerol to the sulfhydryl group of the N-terminal cysteine of a prolipoprotein, the first step in the formation of mature lipoproteins. In Aliivibrio fischeri (strain ATCC 700601 / ES114) (Vibrio fischeri), this protein is Phosphatidylglycerol--prolipoprotein diacylglyceryl transferase.